Reading from the N-terminus, the 104-residue chain is L-rhamnose mutarotase (104 aa).

Y18 is a substrate binding site. H22 functions as the Proton donor in the catalytic mechanism. Residues Y41 and 76–77 contribute to the substrate site; that span reads WW.

This sequence belongs to the rhamnose mutarotase family. As to quaternary structure, homodimer.

The protein resides in the cytoplasm. It catalyses the reaction alpha-L-rhamnose = beta-L-rhamnose. The protein operates within carbohydrate metabolism; L-rhamnose metabolism. Involved in the anomeric conversion of L-rhamnose. The polypeptide is L-rhamnose mutarotase (Sinorhizobium medicae (strain WSM419) (Ensifer medicae)).